Reading from the N-terminus, the 314-residue chain is 4-diphosphocytidyl-2-C-methyl-D-erythritol kinase (314 aa).

Residue K11 is part of the active site. 99 to 109 (PMAAGLAGGST) is a binding site for ATP. D141 is an active-site residue.

It belongs to the GHMP kinase family. IspE subfamily.

It carries out the reaction 4-CDP-2-C-methyl-D-erythritol + ATP = 4-CDP-2-C-methyl-D-erythritol 2-phosphate + ADP + H(+). It functions in the pathway isoprenoid biosynthesis; isopentenyl diphosphate biosynthesis via DXP pathway; isopentenyl diphosphate from 1-deoxy-D-xylulose 5-phosphate: step 3/6. In terms of biological role, catalyzes the phosphorylation of the position 2 hydroxy group of 4-diphosphocytidyl-2C-methyl-D-erythritol. The protein is 4-diphosphocytidyl-2-C-methyl-D-erythritol kinase of Trichodesmium erythraeum (strain IMS101).